Here is a 185-residue protein sequence, read N- to C-terminus: Avirulence protein ATR39-1 (185 aa).

The N-terminal stretch at 1–20 (MVKCTPLLALTVIVSAGSDA) is a signal peptide. Residues 49–66 (RVLRASDVPDEVAAGESR) carry the RxLR-dEER motif.

It belongs to the RxLR effector family.

It localises to the secreted. It is found in the host cell. In terms of biological role, secreted effector that acts as an elicitor of hypersensitive response (HR) specifically on plants carrying defense protein RPP39. The allele ATR39-1 is recognized by RPP39, whereas the ATR39-2 allele is not recognized. The polypeptide is Avirulence protein ATR39-1 (Hyaloperonospora arabidopsidis (strain Emoy2) (Downy mildew agent)).